A 241-amino-acid chain; its full sequence is Phosphoribosylaminoimidazole-succinocarboxamide synthase (241 aa).

Belongs to the SAICAR synthetase family.

The enzyme catalyses 5-amino-1-(5-phospho-D-ribosyl)imidazole-4-carboxylate + L-aspartate + ATP = (2S)-2-[5-amino-1-(5-phospho-beta-D-ribosyl)imidazole-4-carboxamido]succinate + ADP + phosphate + 2 H(+). It participates in purine metabolism; IMP biosynthesis via de novo pathway; 5-amino-1-(5-phospho-D-ribosyl)imidazole-4-carboxamide from 5-amino-1-(5-phospho-D-ribosyl)imidazole-4-carboxylate: step 1/2. The chain is Phosphoribosylaminoimidazole-succinocarboxamide synthase from Lacticaseibacillus casei (strain BL23) (Lactobacillus casei).